Here is a 932-residue protein sequence, read N- to C-terminus: Protocadherin gamma-A2 (932 aa).

Positions 1–28 are cleaved as a signal peptide; the sequence is MAALQKLPHCRKLVLLCFLLATLWEARA. Cadherin domains lie at 29 to 133, 134 to 242, 243 to 347, 348 to 452, 453 to 562, and 570 to 682; these read GQIR…APRF, GVEE…APVF, TQPE…APEF, YMTS…APAF, SRTS…APEI, and DGST…EPSA. At 29-692 the chain is on the extracellular side; sequence GQIRYSVREE…IPNDSDLTLY (664 aa). Residues asparagine 419 and asparagine 545 are each glycosylated (N-linked (GlcNAc...) asparagine). N-linked (GlcNAc...) asparagine glycosylation occurs at asparagine 685. A helical membrane pass occupies residues 693 to 713; the sequence is LVVAVAAVSCVFLAFVIVLLA. Residues 714–932 lie on the Cytoplasmic side of the membrane; that stretch reads HRLRRWHKSR…KKKSGKKEKK (219 aa). Disordered stretches follow at residues 798–841 and 902–932; these read LEEE…WPNN and ATLTNAAGKRDGKAPAGGNGNKKKSGKKEKK. A compositionally biased stretch (polar residues) spans 806-841; the sequence is FSQQAPPNTDWRFSQAQRPGTSGSQNGDDTGTWPNN. The segment covering 922-932 has biased composition (basic residues); sequence NKKKSGKKEKK.

It is found in the cell membrane. Potential calcium-dependent cell-adhesion protein. May be involved in the establishment and maintenance of specific neuronal connections in the brain. This is Protocadherin gamma-A2 (PCDHGA2) from Homo sapiens (Human).